The chain runs to 287 residues: Arylamine N-acetyltransferase, liver isozyme (287 aa).

The active-site Acyl-thioester intermediate is Cys-68. Residues His-107 and Asp-122 contribute to the active site.

Belongs to the arylamine N-acetyltransferase family.

The catalysed reaction is an arylamine + acetyl-CoA = an N-acetylarylamine + CoA. In Gallus gallus (Chicken), this protein is Arylamine N-acetyltransferase, liver isozyme.